Consider the following 243-residue polypeptide: Small ribosomal subunit protein eS4 (243 aa).

In terms of domain architecture, S4 RNA-binding spans 43–105 (IPLIYIVRDY…TGEHYRVLPN (63 aa)).

It belongs to the eukaryotic ribosomal protein eS4 family. As to quaternary structure, part of the 30S ribosomal subunit.

In Thermococcus kodakarensis (strain ATCC BAA-918 / JCM 12380 / KOD1) (Pyrococcus kodakaraensis (strain KOD1)), this protein is Small ribosomal subunit protein eS4.